Consider the following 895-residue polypeptide: Ras and Rab interactor 2 (895 aa).

The 94-residue stretch at Trp97–Tyr190 folds into the SH2 domain. The tract at residues Leu284 to Leu361 is disordered. Positions Ser306–Ala315 are enriched in pro residues. Over residues Thr328–Val338 the composition is skewed to polar residues. Position 366 is a phosphoserine (Ser366). Disordered stretches follow at residues Gly373–Leu442 and Ser460–Lys481. Over residues Ser430–Ser441 the composition is skewed to low complexity. Residue Ser501 is modified to Phosphoserine. Thr509 is modified (phosphothreonine). The region spanning Asp618–Ala757 is the VPS9 domain. The Ras-associating domain occupies Phe787–Asn878.

Belongs to the RIN (Ras interaction/interference) family. As to quaternary structure, homotetramer; probably composed of anti-parallel linkage of two parallel dimers. Interacts with Ras. Interacts with RAB5B, with a much higher affinity for GTP-bound activated RAB5B. Does not interact with other members of the Rab family. In terms of tissue distribution, widely expressed. Expressed in heart, kidney, lung placenta. Expressed at low level in skeletal muscle, spleen and peripheral blood.

It localises to the cytoplasm. In terms of biological role, ras effector protein. May function as an upstream activator and/or downstream effector for RAB5B in endocytic pathway. May function as a guanine nucleotide exchange (GEF) of RAB5B, required for activating the RAB5 proteins by exchanging bound GDP for free GTP. The polypeptide is Ras and Rab interactor 2 (RIN2) (Homo sapiens (Human)).